The chain runs to 179 residues: Inosine/xanthosine triphosphatase (179 aa).

E71 contacts Mg(2+). Position 71–72 (71–72) interacts with substrate; the sequence is EA.

The protein belongs to the YjjX NTPase family. Homodimer. Mg(2+) serves as cofactor. Mn(2+) is required as a cofactor.

The catalysed reaction is XTP + H2O = XDP + phosphate + H(+). It catalyses the reaction ITP + H2O = IDP + phosphate + H(+). Functionally, phosphatase that hydrolyzes non-canonical purine nucleotides such as XTP and ITP to their respective diphosphate derivatives. Probably excludes non-canonical purines from DNA/RNA precursor pool, thus preventing their incorporation into DNA/RNA and avoiding chromosomal lesions. In Shewanella sp. (strain MR-7), this protein is Inosine/xanthosine triphosphatase.